A 188-amino-acid chain; its full sequence is uncharacterized protein (188 aa).

Residues 1–15 (MVSSKDKIKEELKQE) show a composition bias toward basic and acidic residues. Residues 1–21 (MVSSKDKIKEELKQEEPEENV) are disordered.

This is an uncharacterized protein from Saccharolobus islandicus (Sulfolobus islandicus).